A 188-amino-acid chain; its full sequence is Ion-translocating oxidoreductase complex subunit B (188 aa).

Residues 1–26 are hydrophobic; the sequence is MNGVLLAIGVLLPICLASGALLGYAA. Residues 32 to 90 form the 4Fe-4S domain; the sequence is QGDPVAERVNALLPQTQCGQCGYPGCKPYAEAIAAGDRINKCPPGGEATIQALADLLDL. Residues cysteine 49, cysteine 52, cysteine 57, cysteine 73, cysteine 113, cysteine 116, cysteine 119, cysteine 123, cysteine 143, cysteine 146, cysteine 149, and cysteine 153 each contribute to the [4Fe-4S] cluster site. 2 consecutive 4Fe-4S ferredoxin-type domains span residues 104 to 133 and 134 to 163; these read RVAY…GAAR and LMHT…MREI.

It belongs to the 4Fe4S bacterial-type ferredoxin family. RnfB subfamily. In terms of assembly, the complex is composed of six subunits: RnfA, RnfB, RnfC, RnfD, RnfE and RnfG. Requires [4Fe-4S] cluster as cofactor.

It is found in the cell inner membrane. In terms of biological role, part of a membrane-bound complex that couples electron transfer with translocation of ions across the membrane. This is Ion-translocating oxidoreductase complex subunit B from Pseudomonas paraeruginosa (strain DSM 24068 / PA7) (Pseudomonas aeruginosa (strain PA7)).